The primary structure comprises 241 residues: Demethylmenaquinone methyltransferase (241 aa).

Residues Thr60, Asp81, and Asp106–Ala107 contribute to the S-adenosyl-L-methionine site.

This sequence belongs to the class I-like SAM-binding methyltransferase superfamily. MenG/UbiE family.

It carries out the reaction a 2-demethylmenaquinol + S-adenosyl-L-methionine = a menaquinol + S-adenosyl-L-homocysteine + H(+). The protein operates within quinol/quinone metabolism; menaquinone biosynthesis; menaquinol from 1,4-dihydroxy-2-naphthoate: step 2/2. Its function is as follows. Methyltransferase required for the conversion of demethylmenaquinol (DMKH2) to menaquinol (MKH2). This chain is Demethylmenaquinone methyltransferase, found in Staphylococcus epidermidis (strain ATCC 35984 / DSM 28319 / BCRC 17069 / CCUG 31568 / BM 3577 / RP62A).